The primary structure comprises 362 residues: Spermidine/putrescine import ATP-binding protein PotA (362 aa).

Residues Ile4–Ile235 form the ABC transporter domain. Gly37 to Thr44 contacts ATP.

This sequence belongs to the ABC transporter superfamily. Spermidine/putrescine importer (TC 3.A.1.11.1) family. In terms of assembly, the complex is composed of two ATP-binding proteins (PotA), two transmembrane proteins (PotB and PotC) and a solute-binding protein (PotD).

Its subcellular location is the cell membrane. The enzyme catalyses ATP + H2O + polyamine-[polyamine-binding protein]Side 1 = ADP + phosphate + polyamineSide 2 + [polyamine-binding protein]Side 1.. Part of the ABC transporter complex PotABCD involved in spermidine/putrescine import. Responsible for energy coupling to the transport system. This Lactobacillus delbrueckii subsp. bulgaricus (strain ATCC 11842 / DSM 20081 / BCRC 10696 / JCM 1002 / NBRC 13953 / NCIMB 11778 / NCTC 12712 / WDCM 00102 / Lb 14) protein is Spermidine/putrescine import ATP-binding protein PotA.